A 154-amino-acid chain; its full sequence is Cyanate hydratase (154 aa).

Residues arginine 100, glutamate 103, and serine 126 contribute to the active site.

This sequence belongs to the cyanase family.

It carries out the reaction cyanate + hydrogencarbonate + 3 H(+) = NH4(+) + 2 CO2. Catalyzes the reaction of cyanate with bicarbonate to produce ammonia and carbon dioxide. In Aspergillus fumigatus (strain ATCC MYA-4609 / CBS 101355 / FGSC A1100 / Af293) (Neosartorya fumigata), this protein is Cyanate hydratase.